The sequence spans 325 residues: N-acetyl-gamma-glutamyl-phosphate reductase (325 aa).

The active site involves Cys135.

This sequence belongs to the NAGSA dehydrogenase family. Type 1 subfamily.

It localises to the cytoplasm. The catalysed reaction is N-acetyl-L-glutamate 5-semialdehyde + phosphate + NADP(+) = N-acetyl-L-glutamyl 5-phosphate + NADPH + H(+). Its pathway is amino-acid biosynthesis; L-arginine biosynthesis; N(2)-acetyl-L-ornithine from L-glutamate: step 3/4. In terms of biological role, catalyzes the NADPH-dependent reduction of N-acetyl-5-glutamyl phosphate to yield N-acetyl-L-glutamate 5-semialdehyde. The polypeptide is N-acetyl-gamma-glutamyl-phosphate reductase (Flavobacterium johnsoniae (strain ATCC 17061 / DSM 2064 / JCM 8514 / BCRC 14874 / CCUG 350202 / NBRC 14942 / NCIMB 11054 / UW101) (Cytophaga johnsonae)).